Here is a 226-residue protein sequence, read N- to C-terminus: Transmembrane protein 204 (226 aa).

At 1 to 5 (MTVRK) the chain is on the cytoplasmic side. A helical membrane pass occupies residues 6 to 26 (VVATAVLVALVSLVLNNAAAF). Over 27-103 (TPNWVYQTLE…LQFDMMRACN (77 aa)) the chain is Extracellular. Residues 104-124 (LVATAALAAGQLTFVLGLTGL) traverse the membrane as a helical segment. Residues 125 to 136 (PLLSPDAQCWEE) lie on the Cytoplasmic side of the membrane. Residues 137 to 157 (AMAAAFQLASFVLVIGLVTFY) form a helical membrane-spanning segment. Topologically, residues 158–170 (RIGPYTSLSWSCY) are extracellular. Residues 171 to 191 (LNIGACLLATLAAAMLIWNVL) traverse the membrane as a helical segment. The Cytoplasmic segment spans residues 192–226 (HRREDCTAPRVIVISRSLTARFRRGLDNDYVESPC).

The protein localises to the cell junction. Its subcellular location is the adherens junction. The protein resides in the cell membrane. Functionally, can influence paracellular permeability. Appears to be involved in cell-cell interactions through adherens. This Bos taurus (Bovine) protein is Transmembrane protein 204 (TMEM204).